We begin with the raw amino-acid sequence, 132 residues long: Intraflagellar transport protein 20 homolog A (132 aa).

Positions 87 to 112 (EAQQQQLYALIAEKKMQLERYRIEYD) form a coiled coil.

It is found in the golgi apparatus. The protein localises to the cis-Golgi network. Its subcellular location is the cytoplasm. It localises to the cytoskeleton. The protein resides in the microtubule organizing center. It is found in the centrosome. The protein localises to the centriole. Its subcellular location is the cell projection. It localises to the cilium. Functionally, involved in ciliary process assembly. May play a role in the trafficking of ciliary membrane proteins from the Golgi complex to the cilium. Regulates the platelet-derived growth factor receptor-alpha (PDGFRA) signaling pathway. Plays an important role in spermatogenesis, particularly spermiogenesis, when germ cells form flagella. This chain is Intraflagellar transport protein 20 homolog A (ift20-a), found in Xenopus laevis (African clawed frog).